The sequence spans 112 residues: Large ribosomal subunit protein eL30 (112 aa).

The protein belongs to the eukaryotic ribosomal protein eL30 family. In terms of tissue distribution, expressed in roots and leaves.

This Triticum aestivum (Wheat) protein is Large ribosomal subunit protein eL30.